Consider the following 240-residue polypeptide: MINIGLSGSTGKMGRAIAERIDEFENCKISAKFSSTNSLYDLDNFCKHSDVFIDFSTPEILETLVNYALKHNTKLVIGTTGLQPKHFKLLEKAAQTLPILYSANMSIGANLLSYLAKEAIKILDDYDVEILDIHHRNKKDSPSGTAIMLAETIANGKDLDIIFNRGNRPRKKEEIGISSLRGGNVHSIHEISFLDDNEIITLKHEALNNNSFANGAIKAAIWLQDKPSALYSMQDIYKIY.

NAD(+) contacts are provided by residues 8–13 (GSTGKM), 78–80 (GTT), and 102–105 (SANM). H134 acts as the Proton donor/acceptor in catalysis. H135 is a binding site for (S)-2,3,4,5-tetrahydrodipicolinate. K138 (proton donor) is an active-site residue. Position 144-145 (144-145 (GT)) interacts with (S)-2,3,4,5-tetrahydrodipicolinate.

It belongs to the DapB family.

It is found in the cytoplasm. The catalysed reaction is (S)-2,3,4,5-tetrahydrodipicolinate + NAD(+) + H2O = (2S,4S)-4-hydroxy-2,3,4,5-tetrahydrodipicolinate + NADH + H(+). It carries out the reaction (S)-2,3,4,5-tetrahydrodipicolinate + NADP(+) + H2O = (2S,4S)-4-hydroxy-2,3,4,5-tetrahydrodipicolinate + NADPH + H(+). It functions in the pathway amino-acid biosynthesis; L-lysine biosynthesis via DAP pathway; (S)-tetrahydrodipicolinate from L-aspartate: step 4/4. Catalyzes the conversion of 4-hydroxy-tetrahydrodipicolinate (HTPA) to tetrahydrodipicolinate. The sequence is that of 4-hydroxy-tetrahydrodipicolinate reductase from Rickettsia canadensis (strain McKiel).